We begin with the raw amino-acid sequence, 412 residues long: Putative competence-damage inducible protein (412 aa).

It belongs to the CinA family.

The chain is Putative competence-damage inducible protein from Clostridium perfringens (strain ATCC 13124 / DSM 756 / JCM 1290 / NCIMB 6125 / NCTC 8237 / Type A).